The sequence spans 306 residues: Homoserine O-acetyltransferase (306 aa).

Cys-142 serves as the catalytic Acyl-thioester intermediate. 2 residues coordinate substrate: Lys-163 and Ser-192. His-235 functions as the Proton acceptor in the catalytic mechanism. Glu-237 is a catalytic residue. Residue Arg-249 coordinates substrate.

Belongs to the MetA family.

The protein resides in the cytoplasm. The catalysed reaction is L-homoserine + acetyl-CoA = O-acetyl-L-homoserine + CoA. It participates in amino-acid biosynthesis; L-methionine biosynthesis via de novo pathway; O-acetyl-L-homoserine from L-homoserine: step 1/1. Its function is as follows. Transfers an acetyl group from acetyl-CoA to L-homoserine, forming acetyl-L-homoserine. In Brevibacillus brevis (strain 47 / JCM 6285 / NBRC 100599), this protein is Homoserine O-acetyltransferase.